Here is a 174-residue protein sequence, read N- to C-terminus: UPF0664 stress-induced protein C29B12.11c (174 aa).

The disordered stretch occupies residues 147-174 (HLDPLPPYHRPSSSQDQPPHYEEAVNKS). Residues 165–174 (PHYEEAVNKS) show a composition bias toward basic and acidic residues.

The protein belongs to the UPF0664 family.

It is found in the cytoplasm. Its subcellular location is the nucleus. This is UPF0664 stress-induced protein C29B12.11c from Schizosaccharomyces pombe (strain 972 / ATCC 24843) (Fission yeast).